The following is a 296-amino-acid chain: Formylmethanofuran--tetrahydromethanopterin formyltransferase (296 aa).

It belongs to the FTR family. As to quaternary structure, homotetramer composed of two dimers. Dimerization is sufficient for enzyme activity, but tetramerization is required for high thermostability.

Its subcellular location is the cytoplasm. The catalysed reaction is N-formylmethanofuran + 5,6,7,8-tetrahydromethanopterin + H(+) = N(5)-formyl-5,6,7,8-tetrahydromethanopterin + methanofuran. The protein operates within one-carbon metabolism; methanogenesis from CO(2); 5,10-methenyl-5,6,7,8-tetrahydromethanopterin from CO(2): step 2/3. Requires high salt concentrations for activity and thermostability; 1.5-1.8 M KH(2)PO(4) stimulates activity while stabilizing the enzyme. In terms of biological role, catalyzes the reversible transfer of a formyl group from formylmethanofuran (formyl-MFR) to tetrahydromethanopterin (H(4)MPT) to produce 5-formyl tetrahydromethanopterin (5-formyl-H(4)MPT) and methanofuran (MFR). Acts via a ternary-complex mechanism. Uses N-furfurylformamide much less efficiently, does not use N-methylformamide or formamide. Protein overexpressed in E.coli has very similar properties to enzyme purified from M.kandleri. This Methanopyrus kandleri (strain AV19 / DSM 6324 / JCM 9639 / NBRC 100938) protein is Formylmethanofuran--tetrahydromethanopterin formyltransferase.